We begin with the raw amino-acid sequence, 857 residues long: Potassium channel AKT1 (857 aa).

Residues 1–61 (MRGGALLCGQ…PYDHKYRIWE (61 aa)) lie on the Cytoplasmic side of the membrane. Residues 62–82 (AFLVVLVVYTAWVSPFEFGFL) form a helical membrane-spanning segment. Residues 83 to 90 (RKPRPPLS) are Extracellular-facing. The chain crosses the membrane as a helical span at residues 91-111 (ITDNIVNAFFAIDIIMTFFVG). Residues 112-134 (YLDKSTYLIVDDRKQIAFKYLRS) are Cytoplasmic-facing. A helical membrane pass occupies residues 135–155 (WFLLDLVSTIPSEAAMRISSQ). Residues 156–158 (SYG) are Extracellular-facing. Residues 159-179 (LFNMLRLWRLRRVGALFARLE) form a helical; Voltage-sensor membrane-spanning segment. The Cytoplasmic segment spans residues 180 to 193 (KDRNFNYFWVRCAK). Residues 194–214 (LVCVTLFAVHCAACFYYLIAA) traverse the membrane as a helical segment. Topologically, residues 215–241 (RNSNPAKTWIGANVANFLEESLWMRYV) are extracellular. The pore-forming intramembrane region spans 242–261 (TSMYWSITTLTTVGYGDLHP). Residues 262-265 (VNTK) are Extracellular-facing. The chain crosses the membrane as a helical span at residues 266–286 (EMIFDIFYMLFNLGLTAYLIG). Topologically, residues 287 to 857 (NMTNLVVHGT…GDHLIFATDS (571 aa)) are cytoplasmic. 372 to 493 (LFRGVSNDLL…IMNNLLQHLK (122 aa)) is an a nucleoside 3',5'-cyclic phosphate binding site. ANK repeat units lie at residues 515–546 (KMDL…DPNE), 550–579 (NGRT…DPNC), 583–612 (EGSV…TIDA), 614–643 (DVGH…DVTR), 647–676 (TGTS…DVNK), and 680–709 (HGWT…ERRV). The 68-residue stretch at 790–857 (RVTISCAEKD…GDHLIFATDS (68 aa)) folds into the KHA domain.

Belongs to the potassium channel family. Plant (TC 1.A.1.4) subfamily. As to quaternary structure, the potassium channel is probably composed of a homo- or heterotetrameric complex of pore-forming subunits. Possible heteromultimer with AKT2 or KAT3. Part of a K(+)-channel calcium-sensing kinase/phosphatase complex composed by a calcium sensor CBL (CBL1, CBL2, CBL3 or CBL9), a kinase CIPK (CIPK6, CIPK16 or CIPK23), a phosphatase PP2C (AIP1) and a K(+)-channel (AKT1). Interacts directly with AIP1, CBL10, CIPK6, CIPK16 and CIPK23. Post-translationally, phosphorylated by CIPK proteins CIPK6, CIPK16 and CIPK23. The activation by phosphorylation is induced by low K(+) conditions and stimulates K(+) uptake and relocation. Dephosphorylation by AIP1 repressed the transport activity. In terms of tissue distribution, preferentially expressed in the peripheral cell layers of root mature including root cortex and root hairs. Detected also, at a lower level, in the mesophyll of the leaves and at restricted sites corresponding to hydathodes and guard cells.

It localises to the cell membrane. Its function is as follows. Highly selective inward-rectifying potassium channel that mediate potassium uptake by plant roots in response to low K(+) conditions, by a calcium-, CBL-, and CIPK-dependent pathway. Positively regulated by phosphorylation by CIPK23. Negatively regulated by a kinase-independent regulatory mechanism involving a competing direct binding of CBL10. Involved in the stomatal regulation by monitoring the turgor pressure in guard cells. Assuming opened or closed conformations in response to the voltage difference across the membrane, the channel is activated by hyperpolarization. May interact with the cytoskeleton or with regulatory proteins. Is essential with POT5/HAK5 for high-affinity potassium uptake in roots during seedling establishment and postgermination growth under low potassium conditions. This is Potassium channel AKT1 (AKT1) from Arabidopsis thaliana (Mouse-ear cress).